The primary structure comprises 429 residues: Gamma-glutamyl phosphate reductase (429 aa).

The protein belongs to the gamma-glutamyl phosphate reductase family.

The protein resides in the cytoplasm. It carries out the reaction L-glutamate 5-semialdehyde + phosphate + NADP(+) = L-glutamyl 5-phosphate + NADPH + H(+). It participates in amino-acid biosynthesis; L-proline biosynthesis; L-glutamate 5-semialdehyde from L-glutamate: step 2/2. Its function is as follows. Catalyzes the NADPH-dependent reduction of L-glutamate 5-phosphate into L-glutamate 5-semialdehyde and phosphate. The product spontaneously undergoes cyclization to form 1-pyrroline-5-carboxylate. This Bradyrhizobium sp. (strain ORS 278) protein is Gamma-glutamyl phosphate reductase.